The following is a 194-amino-acid chain: Der GTPase-activating protein YihI (194 aa).

Residues 1–81 (MSRSKKTRRI…AKVKKDPRVG (81 aa)) are disordered. Composition is skewed to basic and acidic residues over residues 9–23 (RISDIMPARKADKKP) and 36–47 (TRYELDVQAREE). Residues 59–70 (GSRNVITEQKTA) show a composition bias toward polar residues.

The protein belongs to the YihI family. Interacts with Der.

Functionally, a GTPase-activating protein (GAP) that modifies Der/EngA GTPase function. May play a role in ribosome biogenesis. This chain is Der GTPase-activating protein YihI, found in Haemophilus ducreyi (strain 35000HP / ATCC 700724).